Consider the following 809-residue polypeptide: ATP-dependent zinc metalloprotease FTSH 3, mitochondrial (809 aa).

A mitochondrion-targeting transit peptide spans Met1–Phe83. A compositionally biased stretch (basic and acidic residues) spans Tyr93 to Asn121. A disordered region spans residues Tyr93–Glu122. The chain crosses the membrane as a helical span at residues Phe132 to Gly152. Gly362 to Thr369 is an ATP binding site. Residue His586 coordinates Zn(2+). Glu587 is an active-site residue. Zn(2+)-binding residues include His590 and Asp662. The segment at Gly776–Thr809 is disordered.

This sequence in the N-terminal section; belongs to the AAA ATPase family. The protein in the C-terminal section; belongs to the peptidase M41 family. Zn(2+) is required as a cofactor.

It is found in the mitochondrion inner membrane. Probable ATP-dependent zinc metallopeptidase. Involved in the assembly and/or stability of the complexes I and V of the mitochondrial oxidative phosphorylation system. This is ATP-dependent zinc metalloprotease FTSH 3, mitochondrial (FTSH3) from Arabidopsis thaliana (Mouse-ear cress).